The primary structure comprises 112 residues: Putative pterin-4-alpha-carbinolamine dehydratase (112 aa).

The protein belongs to the pterin-4-alpha-carbinolamine dehydratase family.

It carries out the reaction (4aS,6R)-4a-hydroxy-L-erythro-5,6,7,8-tetrahydrobiopterin = (6R)-L-erythro-6,7-dihydrobiopterin + H2O. The protein is Putative pterin-4-alpha-carbinolamine dehydratase of Shewanella frigidimarina (strain NCIMB 400).